A 265-amino-acid polypeptide reads, in one-letter code: Lipopolysaccharide core heptose(I) kinase WaaP (265 aa).

D162 is a catalytic residue.

It belongs to the protein kinase superfamily. KdkA/RfaP family. It depends on Mg(2+) as a cofactor.

It catalyses the reaction an L-alpha-D-Hep-(1-&gt;3)-L-alpha-D-Hep-(1-&gt;5)-[alpha-Kdo-(2-&gt;4)]-alpha-Kdo-(2-&gt;6)-lipid A + ATP = an L-alpha-D-Hep-(1-&gt;3)-4-O-phospho-L-alpha-D-Hep-(1-&gt;5)-[alpha-Kdo-(2-&gt;4)]-alpha-Kdo-(2-&gt;6)-lipid A + ADP + H(+). It carries out the reaction L-alpha-D-Hep-(1-&gt;3)-L-alpha-D-Hep-(1-&gt;5)-[alpha-Kdo-(2-&gt;4)]-alpha-Kdo-(2-&gt;6)-lipid A (E. coli) + ATP = L-alpha-D-Hep-(1-&gt;3)-4-O-phospho-L-alpha-D-Hep-(1-&gt;5)-[alpha-Kdo-(2-&gt;4)]-alpha-Kdo-(2-&gt;6)-lipid A (E. coli) + ADP + H(+). It functions in the pathway bacterial outer membrane biogenesis; LPS core biosynthesis. In terms of biological role, kinase involved in the biosynthesis of the core oligosaccharide region of lipopolysaccharide (LPS). Catalyzes the phosphorylation of heptose I (HepI), the first heptose added to the Kdo2-lipid A module. The protein is Lipopolysaccharide core heptose(I) kinase WaaP of Escherichia coli (strain K12).